A 229-amino-acid chain; its full sequence is MASSNFFLLTALIALVATQAMASDPSPLQDFCVADRNSPVHVNGFPCKDAKDVNVDDFFLAANLDKPMDTTKSKAGSNVTLINVMKLAGLNTLGISMARIDYAPKGQNPPHTHPRATEILTVLEGTLYVGFVTSNQANGENKLFTKTLNKGDVFVFPQGLIHFQFNPSYDKPAVAIAALSSQNPGAITIANAVFGSNSPISDDVLAKAFQVDKKAVDWLQAQFWENNHN.

Positions 1–22 (MASSNFFLLTALIALVATQAMA) are cleaved as a signal peptide. A disulfide bond links cysteine 32 and cysteine 47. One can recognise a Cupin type-1 domain in the interval 62 to 217 (ANLDKPMDTT…AFQVDKKAVD (156 aa)). An N-linked (GlcNAc...) asparagine glycan is attached at asparagine 78. 4 residues coordinate Mn(2+): histidine 111, histidine 113, glutamate 118, and histidine 162.

This sequence belongs to the germin family. In terms of assembly, oligomer (believed to be a pentamer but probably hexamer).

It is found in the secreted. The protein localises to the extracellular space. It localises to the apoplast. Functionally, may play a role in plant defense. Probably has no oxalate oxidase activity even if the active site is conserved. In Oryza sativa subsp. japonica (Rice), this protein is Germin-like protein 12-2.